A 640-amino-acid chain; its full sequence is Chaperone protein DnaK (640 aa).

Thr196 is modified (phosphothreonine; by autocatalysis). Disordered regions lie at residues Asn510–Asn530 and Ala598–Lys640.

The protein belongs to the heat shock protein 70 family.

Its function is as follows. Acts as a chaperone. The protein is Chaperone protein DnaK of Prosthecochloris aestuarii (strain DSM 271 / SK 413).